Consider the following 408-residue polypeptide: LL-diaminopimelate aminotransferase (408 aa).

Substrate contacts are provided by tyrosine 15 and glycine 42. Pyridoxal 5'-phosphate is bound by residues tyrosine 72, 108–109 (SK), tyrosine 132, asparagine 187, tyrosine 218, and 246–248 (SFS). Residues lysine 109, tyrosine 132, and asparagine 187 each contribute to the substrate site. Position 249 is an N6-(pyridoxal phosphate)lysine (lysine 249). The pyridoxal 5'-phosphate site is built by arginine 257 and asparagine 292. Substrate is bound by residues asparagine 292 and arginine 388.

This sequence belongs to the class-I pyridoxal-phosphate-dependent aminotransferase family. LL-diaminopimelate aminotransferase subfamily. Homodimer. Requires pyridoxal 5'-phosphate as cofactor.

It carries out the reaction (2S,6S)-2,6-diaminopimelate + 2-oxoglutarate = (S)-2,3,4,5-tetrahydrodipicolinate + L-glutamate + H2O + H(+). Its pathway is amino-acid biosynthesis; L-lysine biosynthesis via DAP pathway; LL-2,6-diaminopimelate from (S)-tetrahydrodipicolinate (aminotransferase route): step 1/1. In terms of biological role, involved in the synthesis of meso-diaminopimelate (m-DAP or DL-DAP), required for both lysine and peptidoglycan biosynthesis. Catalyzes the direct conversion of tetrahydrodipicolinate to LL-diaminopimelate. The chain is LL-diaminopimelate aminotransferase from Prochlorococcus marinus (strain AS9601).